Here is a 206-residue protein sequence, read N- to C-terminus: LexA repressor (206 aa).

A DNA-binding region (H-T-H motif) is located at residues 28-48 (RAEIATRLGFKSANAAEEHLK). Catalysis depends on for autocatalytic cleavage activity residues S123 and K160.

The protein belongs to the peptidase S24 family. Homodimer.

It carries out the reaction Hydrolysis of Ala-|-Gly bond in repressor LexA.. In terms of biological role, represses a number of genes involved in the response to DNA damage (SOS response), including recA and lexA. In the presence of single-stranded DNA, RecA interacts with LexA causing an autocatalytic cleavage which disrupts the DNA-binding part of LexA, leading to derepression of the SOS regulon and eventually DNA repair. The chain is LexA repressor from Shewanella oneidensis (strain ATCC 700550 / JCM 31522 / CIP 106686 / LMG 19005 / NCIMB 14063 / MR-1).